The primary structure comprises 143 residues: Small ribosomal subunit protein eS6 (143 aa).

This sequence belongs to the eukaryotic ribosomal protein eS6 family.

In Methanoregula boonei (strain DSM 21154 / JCM 14090 / 6A8), this protein is Small ribosomal subunit protein eS6.